Here is a 254-residue protein sequence, read N- to C-terminus: Triosephosphate isomerase (254 aa).

Substrate is bound at residue 10 to 12 (NWK). The Electrophile role is filled by His-99. The Proton acceptor role is filled by Glu-169. Residues Gly-175, Ser-215, and 236–237 (GG) each bind substrate.

The protein belongs to the triosephosphate isomerase family. In terms of assembly, homodimer.

Its subcellular location is the cytoplasm. The enzyme catalyses D-glyceraldehyde 3-phosphate = dihydroxyacetone phosphate. Its pathway is carbohydrate biosynthesis; gluconeogenesis. It functions in the pathway carbohydrate degradation; glycolysis; D-glyceraldehyde 3-phosphate from glycerone phosphate: step 1/1. Involved in the gluconeogenesis. Catalyzes stereospecifically the conversion of dihydroxyacetone phosphate (DHAP) to D-glyceraldehyde-3-phosphate (G3P). The chain is Triosephosphate isomerase from Chlamydia abortus (strain DSM 27085 / S26/3) (Chlamydophila abortus).